A 248-amino-acid polypeptide reads, in one-letter code: 14-3-3 protein (248 aa).

Coiled-coil stretches lie at residues 13–33 (MAQLNENAERYDEMVETMRKI) and 91–111 (RQKIEKELSDICNDILKLLQE). 135 to 136 (RY) contributes to the O-phospho-L-serine binding site. The residue at position 214 (Thr-214) is a Phosphothreonine. Positions 237-248 (TDSAGDDNAEEK) match the Putative polyglycylation target motif (T/G)X0-1(D/E)X1-3-G(D/E)X1-2(gE)2-4, where X is polar or negatively charged amino acid, and gE is polyglycylated glutamine motif. Glu-246 carries the 5-glutamyl polyglycine modification.

This sequence belongs to the 14-3-3 family. Homodimer. Homodimerizes via N-terminal domains. Oligomerizes forming homotrimers, homotetramers and protein filaments. Oligomerization is hindered by polyglycylation in vivo. Interacts with a large number of both cytosolic and membrane proteins in trophozoites and encysting parasites. Interacts with a serine/threonine protein kinase GL50803_112076 (gCDC7). Component of a multiprotein complex containing gCDC7 and GL50803_94117 (gDBF4), a regulatory subunit of gCDC7, during both the trophozoite and encysting stages of the parasite. Interacts with fructose-bisphosphate aldolase GL50803_11043 (gFBA), pyruvate kinase GL50803_17143 (gPyk), acetyl-CoA synthetase GL50803_13608 (gACS), protein kinase GL50803_22165 (gSTE), DEAD box RNA helicase GL50803_34684 (gVASA) and Golgi/cell cycle associated protein GL50803_17472 (gGCCA). Interacts with actin. Interacts with both monomeric phosphorylated and unphosphorylated actin. The interaction is enhanced by phosphorylation of actin and inhibited by Rho GTPase Rac. In terms of processing, phosphorylated constitutively throughout the life cycle. Phosphorylation is very high in trophozoites and encysting cells of 12 hours. Phosphorylated during excystation. Phosphorylation promotes its binding to various target proteins and is critical for encystation process. Phosphorylation modification is not influenced by polyglycylation modification. Polyglycylated on a glutamate residue, resulting in polyglycine chain on the gamma-carboxyl group. Polyglycylated by the tubulin--tyrosine ligase-like protein GL50803_8456 (gTTLL3). The polyglycine chain is shortened by metallopeptidases of the M20 family, namely dipeptidases GL50803_15832 (gDIP1) and GL50803_8407 (gDIP2). The length of the polyglycine chain is developmental stage-dependent. In trophozoites, glycine residues range from 10 to 31, with the greatest occurrence of 21 residues. In 12 hour encystation stage, glycine residues range from 6 to 22, with the greatest occurrence of 10 residues. The differential rate of polyglycylation/deglycylation during the encystation process regulates the intracellular localization of this protein. Relocalizes partially from the cytoplasm inside the nuclei following the shortening of the polyglycine chain in encysting cells. Polyglycylation modification is not influenced by phosphorylation modification. Polyglycylation prevents oligomerization in vivo.

Its subcellular location is the cytoplasm. It is found in the cytoskeleton. The protein localises to the nucleus. The protein resides in the cell projection. It localises to the cilium. Its subcellular location is the flagellum. It is found in the spindle. The protein localises to the nucleus envelope. The protein resides in the endoplasmic reticulum. Functionally, adapter protein implicated in the regulation of a large spectrum of both general and specialized signaling pathways. Binds to a large number of partners, usually by recognition of a phosphoserine or phosphothreonine motif. Binding generally results in the modulation of the activity of the binding partner. Binds with varying affinity to various synthetic phosphopeptides having a consensus binding motif RSX(pS/pT)XP, called mode-1, where X is any residue and pS/pT is a phosphorylated serine/threonine, and to synthetic phosphopeptides having a consensus binding motif Xp(S/T)X1-2-COOH, called mode-3, in which the phosphorylated residue occupies the penultimate C-terminal position in the target protein, but does not bind to their unphosphorylated counterparts. Binds to synthetic human RAF1 phosphopeptides, but not to their unphosphorylated forms. Binds to difopein, a polypeptide containing a phosphorylation-independent binding motif. Involved in encystation. Involved in cell proliferation. Required for actin and tubulin cytoskeletal organization. Regulates actin filament formation and nuclear size. This is 14-3-3 protein from Giardia intestinalis (strain ATCC 50803 / WB clone C6) (Giardia lamblia).